Here is a 255-residue protein sequence, read N- to C-terminus: Imidazole glycerol phosphate synthase subunit HisF (255 aa).

Catalysis depends on residues D11 and D130.

It belongs to the HisA/HisF family. In terms of assembly, heterodimer of HisH and HisF.

The protein localises to the cytoplasm. It catalyses the reaction 5-[(5-phospho-1-deoxy-D-ribulos-1-ylimino)methylamino]-1-(5-phospho-beta-D-ribosyl)imidazole-4-carboxamide + L-glutamine = D-erythro-1-(imidazol-4-yl)glycerol 3-phosphate + 5-amino-1-(5-phospho-beta-D-ribosyl)imidazole-4-carboxamide + L-glutamate + H(+). Its pathway is amino-acid biosynthesis; L-histidine biosynthesis; L-histidine from 5-phospho-alpha-D-ribose 1-diphosphate: step 5/9. In terms of biological role, IGPS catalyzes the conversion of PRFAR and glutamine to IGP, AICAR and glutamate. The HisF subunit catalyzes the cyclization activity that produces IGP and AICAR from PRFAR using the ammonia provided by the HisH subunit. This Exiguobacterium sp. (strain ATCC BAA-1283 / AT1b) protein is Imidazole glycerol phosphate synthase subunit HisF.